The following is a 246-amino-acid chain: Probable transcriptional regulatory protein GWCH70_2524 (246 aa).

This sequence belongs to the TACO1 family.

The protein resides in the cytoplasm. The chain is Probable transcriptional regulatory protein GWCH70_2524 from Geobacillus sp. (strain WCH70).